Consider the following 327-residue polypeptide: Ornithine carbamoyltransferase, mitochondrial (327 aa).

Residues 63–66 (STRT), Arg-114, His-141, and Gln-144 each bind carbamoyl phosphate. Residues Asn-172, Asp-236, Ser-240, and Met-241 each coordinate L-ornithine. The active-site Proton acceptor is the Cys-276. Residues 276–277 (CL) and Arg-303 contribute to the carbamoyl phosphate site.

It belongs to the aspartate/ornithine carbamoyltransferase superfamily. OTCase family. In terms of assembly, interacts with trx2.

Its subcellular location is the mitochondrion matrix. The catalysed reaction is carbamoyl phosphate + L-ornithine = L-citrulline + phosphate + H(+). It functions in the pathway amino-acid biosynthesis; L-arginine biosynthesis; L-arginine from L-ornithine and carbamoyl phosphate: step 1/3. Functionally, ornithine carbamoyltransferase involved in the synthesis of arginine from glutamate via ornithine and the urea cycle. The chain is Ornithine carbamoyltransferase, mitochondrial (arg3) from Schizosaccharomyces pombe (strain 972 / ATCC 24843) (Fission yeast).